We begin with the raw amino-acid sequence, 169 residues long: Cell division inhibitor SulA (169 aa).

Residues 1–22 (MHTSIYANRSTSFSPSAGNDTQ) form a disordered region. The ftsZ binding stretch occupies residues 106–112 (ALRTGNY). The segment at 162–169 (KIHSNLYH) is lon protease binding.

This sequence belongs to the SulA family. In terms of assembly, interacts with FtsZ. Post-translationally, is rapidly cleaved and degraded by the Lon protease once DNA damage is repaired.

Functionally, component of the SOS system and an inhibitor of cell division. Accumulation of SulA causes rapid cessation of cell division and the appearance of long, non-septate filaments. In the presence of GTP, binds a polymerization-competent form of FtsZ in a 1:1 ratio, thus inhibiting FtsZ polymerization and therefore preventing it from participating in the assembly of the Z ring. This mechanism prevents the premature segregation of damaged DNA to daughter cells during cell division. This is Cell division inhibitor SulA from Enterobacter sp. (strain 638).